The following is a 283-amino-acid chain: 4-diphosphocytidyl-2-C-methyl-D-erythritol kinase (283 aa).

The active site involves K10. An ATP-binding site is contributed by P99–S109. The active site involves D141.

This sequence belongs to the GHMP kinase family. IspE subfamily. As to quaternary structure, homodimer.

It catalyses the reaction 4-CDP-2-C-methyl-D-erythritol + ATP = 4-CDP-2-C-methyl-D-erythritol 2-phosphate + ADP + H(+). Its pathway is isoprenoid biosynthesis; isopentenyl diphosphate biosynthesis via DXP pathway; isopentenyl diphosphate from 1-deoxy-D-xylulose 5-phosphate: step 3/6. Catalyzes the phosphorylation of the position 2 hydroxy group of 4-diphosphocytidyl-2C-methyl-D-erythritol. The protein is 4-diphosphocytidyl-2-C-methyl-D-erythritol kinase of Escherichia coli O7:K1 (strain IAI39 / ExPEC).